The primary structure comprises 306 residues: Dioxygenase FrzG (306 aa).

Fe cation-binding residues include His-132, Asp-134, and His-216.

This sequence belongs to the PhyH family. Homodimer. Fe cation is required as a cofactor.

It carries out the reaction (1S,4S)-4-[(4-methoxyphenyl)methyl]-2-methyl-2,5-diazaspiro[bicyclo[3.2.1]octane-6,1'-cyclohexan]-4'-one + 2-oxoglutarate + O2 = (2S)-3-(4-methoxyphenyl)-2-[(3S)-3-(methylamino)-8-oxo-1-azaspiro[4.5]decan-1-yl]propanal + succinate + CO2. It functions in the pathway secondary metabolite biosynthesis. Its function is as follows. Dioxygenase; part of the gene cluster that mediates the biosynthesis of the alkaloid (-)-FR901483, a potent immunosuppressant that shows efficacy in animal models and a probable inhibitor of purine nucleotide biosynthesis by targeting phosphoribosylpyrophosphate amidotransferase (PPAT). Within the pathway, FrzG cleaves the C9-N10' bond to yield a conjugated iminium. FrzG is also able to catalyze the dehydrogenation between C7 and C8 which leads to a shunt product. The biosynthesis of (-)-FR901483 starts with the condensation of two L-tyrosines to yield (S,S)-dityrosyl-piperazine. This process occurs in 3 steps with the non-canonical nonribosomal peptide synthetase FrzA catalyzing the reduction of L-tyrosine into L-tyrosinal, the spontaneous condensation of 2 L-tyrosinal units, and the subsequent reduction by the NmrA-like family domain-containing oxidoreductase FrzB. The cytochrome P450 monooxygenase FrzC then performs coupling between N10 and C1' to morph the piperazine into a 1,4-diazabicyclo[3.2.1]octane spiro-fused to a 2,5-cyclohexadienone. The dienone portion is further reduced to cyclohexanone by the flavin-dependent reductase FrzD. The methyltranserases (MTs) FrzE and FrzF are then involved in the methylation at the C10' amine and the C4 phenolic oxygen, respectively. The order of the two MTs appear to be interchangeable. Cleavage of the C9-N10' bond by the dioxygenase FrzG then leads to formation of a conjugated iminium. In addition to the oxidation of C9, an additional dehydrogenation between C7 and C8 can occur to give a likely shunt product. The next biosynthetic step is the intramolecular aldol condensation catalyzed by the newly identified aldolase FrzH to yield an aza-tricyclic product with the formation of a C9-C3' bond. The short-chain dehydrogenase/reductase FrzI then produces dephospho-(-)-FR901483 that is phosphorylated at C4'-OH into (-)-FR901483 by the phosphotransferase FrzJ. In Cladobotryum sp, this protein is Dioxygenase FrzG.